A 376-amino-acid polypeptide reads, in one-letter code: tRNA-specific 2-thiouridylase MnmA (376 aa).

ATP is bound by residues 10–17 and Met36; that span reads GMSGGVDS. The interaction with target base in tRNA stretch occupies residues 96 to 98; sequence NPD. Catalysis depends on Cys101, which acts as the Nucleophile. The cysteines at positions 101 and 198 are disulfide-linked. Gly125 lines the ATP pocket. The tract at residues 148 to 150 is interaction with tRNA; sequence KDQ. Cys198 (cysteine persulfide intermediate) is an active-site residue. The segment at 305–306 is interaction with tRNA; that stretch reads RY.

It belongs to the MnmA/TRMU family.

The protein resides in the cytoplasm. The enzyme catalyses S-sulfanyl-L-cysteinyl-[protein] + uridine(34) in tRNA + AH2 + ATP = 2-thiouridine(34) in tRNA + L-cysteinyl-[protein] + A + AMP + diphosphate + H(+). Functionally, catalyzes the 2-thiolation of uridine at the wobble position (U34) of tRNA, leading to the formation of s(2)U34. This is tRNA-specific 2-thiouridylase MnmA from Protochlamydia amoebophila (strain UWE25).